A 228-amino-acid polypeptide reads, in one-letter code: Superoxide dismutase [Mn], mitochondrial (228 aa).

Residues 1 to 24 (MALRTLVSRRTLATGLGFRQQLRG) constitute a mitochondrion transit peptide. The Mn(2+) site is built by His-52, His-100, Asp-189, and His-193.

It belongs to the iron/manganese superoxide dismutase family. Homotetramer. It depends on Mn(2+) as a cofactor.

It is found in the mitochondrion matrix. The catalysed reaction is 2 superoxide + 2 H(+) = H2O2 + O2. In terms of biological role, destroys superoxide anion radicals which are normally produced within the cells and which are toxic to biological systems. In Nicotiana plumbaginifolia (Leadwort-leaved tobacco), this protein is Superoxide dismutase [Mn], mitochondrial (SODA).